The following is a 405-amino-acid chain: Serpin B12 (405 aa).

Residues 64–83 form a disordered region; that stretch reads SQNESKEPDPCLKSNKQKAG.

It belongs to the serpin family. Ov-serpin subfamily. As to quaternary structure, interacts with SLFN12; as part of a pathway regulating cell differentiation. May interact with USP14. As to expression, expressed in many tissues, including brain, bone marrow, lymph node, heart, lung, liver, pancreas, testis, ovary, and intestine.

The protein resides in the cytoplasm. Its function is as follows. Inhibits trypsin and plasmin, but not thrombin, coagulation factor Xa, or urokinase-type plasminogen activator. May play a role in cell differentiation. This chain is Serpin B12 (SERPINB12), found in Homo sapiens (Human).